Consider the following 318-residue polypeptide: Pantothenate kinase (318 aa).

96-103 (GSVAVGKS) lines the ATP pocket.

This sequence belongs to the prokaryotic pantothenate kinase family.

It localises to the cytoplasm. It catalyses the reaction (R)-pantothenate + ATP = (R)-4'-phosphopantothenate + ADP + H(+). Its pathway is cofactor biosynthesis; coenzyme A biosynthesis; CoA from (R)-pantothenate: step 1/5. In Rhodopseudomonas palustris (strain BisB5), this protein is Pantothenate kinase.